Here is a 188-residue protein sequence, read N- to C-terminus: V-type ATP synthase subunit E (188 aa).

It belongs to the V-ATPase E subunit family.

Functionally, produces ATP from ADP in the presence of a proton gradient across the membrane. The protein is V-type ATP synthase subunit E (atpE) of Thermus thermophilus (strain ATCC 27634 / DSM 579 / HB8).